The sequence spans 443 residues: Signal recognition particle 54 kDa protein (443 aa).

GTP contacts are provided by residues G104 to T111, D184 to R188, and T242 to D245.

Belongs to the GTP-binding SRP family. SRP54 subfamily. As to quaternary structure, part of the signal recognition particle protein translocation system, which is composed of SRP and FtsY. Archaeal SRP consists of a 7S RNA molecule of 300 nucleotides and two protein subunits: SRP54 and SRP19.

Its subcellular location is the cytoplasm. It carries out the reaction GTP + H2O = GDP + phosphate + H(+). Involved in targeting and insertion of nascent membrane proteins into the cytoplasmic membrane. Binds to the hydrophobic signal sequence of the ribosome-nascent chain (RNC) as it emerges from the ribosomes. The SRP-RNC complex is then targeted to the cytoplasmic membrane where it interacts with the SRP receptor FtsY. The chain is Signal recognition particle 54 kDa protein from Methanosarcina mazei (strain ATCC BAA-159 / DSM 3647 / Goe1 / Go1 / JCM 11833 / OCM 88) (Methanosarcina frisia).